Consider the following 356-residue polypeptide: Peptide chain release factor 1 (356 aa).

Q233 carries the N5-methylglutamine modification.

This sequence belongs to the prokaryotic/mitochondrial release factor family. Post-translationally, methylated by PrmC. Methylation increases the termination efficiency of RF1.

The protein resides in the cytoplasm. Peptide chain release factor 1 directs the termination of translation in response to the peptide chain termination codons UAG and UAA. The polypeptide is Peptide chain release factor 1 (Symbiobacterium thermophilum (strain DSM 24528 / JCM 14929 / IAM 14863 / T)).